Here is a 943-residue protein sequence, read N- to C-terminus: Protein translocase subunit SecA (943 aa).

ATP contacts are provided by residues Q90, 108–112, and D509; that span reads GEGKT. The interval 537–556 is disordered; it reads NEHKPPIPKQRSSKSKGGFS.

The protein belongs to the SecA family. In terms of assembly, monomer and homodimer. Part of the essential Sec protein translocation apparatus which comprises SecA, SecYEG and auxiliary proteins SecDF. Other proteins may also be involved.

The protein resides in the cell inner membrane. It is found in the cellular thylakoid membrane. It localises to the cytoplasm. It carries out the reaction ATP + H2O + cellular proteinSide 1 = ADP + phosphate + cellular proteinSide 2.. In terms of biological role, part of the Sec protein translocase complex. Interacts with the SecYEG preprotein conducting channel. Has a central role in coupling the hydrolysis of ATP to the transfer of proteins into and across the cell membrane, serving as an ATP-driven molecular motor driving the stepwise translocation of polypeptide chains across the membrane. Probably participates in protein translocation into and across both the cytoplasmic and thylakoid membranes in cyanobacterial cells. This Prochlorococcus marinus (strain MIT 9301) protein is Protein translocase subunit SecA.